The following is a 1040-amino-acid chain: MQVLPPSSTGGPSRLFIMRPVATTLLMVAILLAGIIGYRALPVSALPEVDYPTIQVVTLYPGASPDVMTSAVTAPLERQFGQMSGLKQMSSQSSGGASVITLQFQLTLPLDVAEQEVQAAINAATNLLPSDLPNPPVYSKVNPADPPIMTLAVTSTAMPMTQVEDMVETRVAQKISQISGVGLVTLSGGQRPAVRVKLNAQAIAALGLTSETVRTAITGANVNSAKGSLDGPSRAVTLSANDQMQSAEEYRQLIIAYQNGAPIRLGDVATVEQGAENSWLGAWANKEQAIVMNVQRQPGANIISTADSIRQMLPQLTESLPKSVKVTVLSDRTTNIRASVDDTQFELMMAIALVVMIIYLFLRNIPATIIPGVAVPLSLIGTFAVMVFLDFSINNLTLMALTIATGFVVDDAIVVIENISRYIEKGEKPLAAALKGAGEIGFTIISLTFSLIAVLIPLLFMGDIVGRLFREFAITLAVAILISAVVSLTLTPMMCARMLSQESLRKQNRFSRASEKMFDRIIAAYGRGLAKVLNHPWLTLSVALSTLLLSVLLWVFIPKGFFPVQDNGIIQGTLQAPQSSSFANMAQRQRQVADVILQDPAVQSLTSFVGVDGTNPSLNSARLQINLKPLDERDDRVQKVIARLQTAVDKVPGVDLFLQPTQDLTIDTQVSRTQYQFTLQATSLDALSTWVPQLMEKLQQLPQLSDVSSDWQDKGLVAYVNVDRDSASRLGISMADVDNALYNAFGQRLISTIYTQANQYRVVLEHNTENTPGLAALDTIRLTSSDGGVVPLSSIAKIEQRFAPLSINHLDQFPVTTISFNVPDNYSLGDAVQAIMDTEKTLNLPVDITTQFQGSTLAFQSALGSTVWLIVAAVVAMYIVLGILYESFIHPITILSTLPTAGVGALLALMIAGSELDVIAIIGIILLIGIVKKNAIMMIDFALAAEREQGMSPRDAIYQACLLRFRPILMTTLAALLGALPLMLSTGVGAELRRPLGIGMVGGLIVSQVLTLFTTPVIYLLFDRLALWTKSRFARHEEEA.

Transmembrane regions (helical) follow at residues 16–36 (FIMR…AGII), 347–367 (LMMA…NIPA), 369–389 (IIPG…MVFL), 396–416 (LTLM…IVVI), 440–460 (IGFT…PLLF), 472–492 (FAIT…TLTP), 537–557 (WLTL…WVFI), 863–883 (LGST…VLGI), 888–908 (FIHP…ALLA), 911–931 (IAGS…IGIV), 968–988 (ILMT…STGV), and 998–1018 (IGMV…TPVI).

It belongs to the resistance-nodulation-cell division (RND) (TC 2.A.6) family. MdtB subfamily. As to quaternary structure, part of a tripartite efflux system composed of MdtA, MdtB and MdtC. MdtB forms a heteromultimer with MdtC.

It localises to the cell inner membrane. Its function is as follows. The MdtABC tripartite complex confers resistance against novobiocin and deoxycholate. In Escherichia coli O139:H28 (strain E24377A / ETEC), this protein is Multidrug resistance protein MdtB.